Reading from the N-terminus, the 62-residue chain is Large ribosomal subunit protein uL30 (62 aa).

The protein belongs to the universal ribosomal protein uL30 family. Part of the 50S ribosomal subunit.

The protein is Large ribosomal subunit protein uL30 of Kosmotoga olearia (strain ATCC BAA-1733 / DSM 21960 / TBF 19.5.1).